The sequence spans 303 residues: MYIQILGSAAGGGFPQWNCNCANCKGYRDGSLRATARTQSSIALSDDGVHWILCNASPDIRAQLQAFAPMQPARALRDTGINAIVLLDSQIDHTTGLLSLREGCPHQVWCTDMVHQDLTTGFPLFNMLSHWNGGLQWNLIELEGSFVIPACPNLRFTPFPLRSAAPPYSPHRFDPHPGDNLGLLVEDIRTGGKLFYAPGLGQVDDKLLAMMHGADCLLVDGTLWEDDEMQRRGVGTRTGREMGHLAQNGPGGMLEVLDGFPRQRKVLIHINNTNPILDEDSPERAEVQRRGVEVAFDGMSIEL.

This sequence belongs to the PqqB family.

The protein operates within cofactor biosynthesis; pyrroloquinoline quinone biosynthesis. Functionally, may be involved in the transport of PQQ or its precursor to the periplasm. The sequence is that of Coenzyme PQQ synthesis protein B from Pseudomonas putida (strain W619).